A 332-amino-acid chain; its full sequence is Phosphate acyltransferase (332 aa).

Belongs to the PlsX family. In terms of assembly, homodimer. Probably interacts with PlsY.

It is found in the cytoplasm. It carries out the reaction a fatty acyl-[ACP] + phosphate = an acyl phosphate + holo-[ACP]. The protein operates within lipid metabolism; phospholipid metabolism. Functionally, catalyzes the reversible formation of acyl-phosphate (acyl-PO(4)) from acyl-[acyl-carrier-protein] (acyl-ACP). This enzyme utilizes acyl-ACP as fatty acyl donor, but not acyl-CoA. The chain is Phosphate acyltransferase from Thermoanaerobacter pseudethanolicus (strain ATCC 33223 / 39E) (Clostridium thermohydrosulfuricum).